A 90-amino-acid chain; its full sequence is UPF0367 protein Npun_R4552 (90 aa).

Belongs to the UPF0367 family.

This chain is UPF0367 protein Npun_R4552, found in Nostoc punctiforme (strain ATCC 29133 / PCC 73102).